A 108-amino-acid chain; its full sequence is MTNSQSDAALAAVPDRFDPSAGGPGAYDTPLGITNPPIDELLDRVSSKYALVIYAAKRARQINDYYNQLGEGILEYVGPLVEPGLQEKPLSIALREIHGDLLEHTEGE.

The interval 1–32 (MTNSQSDAALAAVPDRFDPSAGGPGAYDTPLG) is disordered.

This sequence belongs to the RNA polymerase subunit omega family. The RNAP catalytic core consists of 2 alpha, 1 beta, 1 beta' and 1 omega subunit. When a sigma factor is associated with the core the holoenzyme is formed, which can initiate transcription.

It carries out the reaction RNA(n) + a ribonucleoside 5'-triphosphate = RNA(n+1) + diphosphate. In terms of biological role, promotes RNA polymerase assembly. Latches the N- and C-terminal regions of the beta' subunit thereby facilitating its interaction with the beta and alpha subunits. The sequence is that of DNA-directed RNA polymerase subunit omega from Mycobacterium avium (strain 104).